The following is a 782-amino-acid chain: MFPPSGSTGLIPPSHFQARPLSTLPRMAPTWLSDIPLVQPPGHQDVSERQLDTQRPQVTMWERDVSSDRQEPGRRGRSWGLEGSQALSQQAEVIARQLQELRRLEEEVRLLRETSLQQKMRLEAQAMELEALARAEKAGRAEAEGLRAALAGAEVVRKNLEEGSQRELEEVQRLHQEQLSSLTQAHKEALSSLTSKAEGLEKSLSSLETRRAGEAKELAEAQREAELLRKQLSKTQEDLEAQVTLVENLRKYVGEQVPSEVHSQTWELERQKLLETMQHLQEDRDSLQATAELLQVRVQSLTHILALQEEELTRKVQPSDSLEPEFTRKCQSLLNRWREKVFALMVQLKAQELEHSDSVKQLKGQVASLQEKVTSQSQEQAILQQSLQDKAAEVEVERMGAKGLQLELSRAQEARCRWQQQTASAEEQLRLVVNAVSSSQIWLETTMAKVEGAAAQLPSLNNRLSYAVRKVHTIRGLIAQKLALAQLRQESCPLPPPVTDVSLELQQLREERNRLDAELQLSARLIQQEVGRAREQGEAERQQLSKVAQQLEQELQQTQESLASLGLQLEVARQGQQESTEEAASLRQELTQQQELYGQALQEKVAEVETRLREQLSDTERRLNEARREHAKAVVSLRQIQRRAAQEKERSQELRRLQEEARKEEGQRLARRLQELERDKNLMLATLQQEGLLSRYKQQRLLTVLPSLLDKKKSVVSSPRPPECSASASVAAAVPTRESIKGSLSVLLDDLQGLSEAISKEEAVCQGDNLDRCSSSNPQMSS.

Composition is skewed to basic and acidic residues over residues 62 to 74 (ERDV…EPGR) and 208 to 218 (ETRRAGEAKEL). 2 disordered regions span residues 62–82 (ERDV…WGLE) and 185–218 (AHKE…AKEL). Coiled coils occupy residues 82-314 (EGSQ…ELTR), 344-398 (LMVQ…EVER), and 498-691 (VTDV…QQEG).

The protein localises to the cytoplasm. The protein resides in the nucleus. May be a regulator of keratinocyte proliferation or differentiation. This chain is Coiled-coil alpha-helical rod protein 1 (CCHCR1), found in Gorilla gorilla gorilla (Western lowland gorilla).